The chain runs to 289 residues: Porin (289 aa).

Homotrimer.

The protein resides in the cell outer membrane. Forms channels that allow the passive diffusion of small hydrophilic solutes up to an exclusion limit of about 0.6 kDa. This Fuscovulum blasticum (Rhodobacter blasticus) protein is Porin (opmA).